Here is a 142-residue protein sequence, read N- to C-terminus: ATP synthase epsilon chain (142 aa).

It belongs to the ATPase epsilon chain family. In terms of assembly, F-type ATPases have 2 components, CF(1) - the catalytic core - and CF(0) - the membrane proton channel. CF(1) has five subunits: alpha(3), beta(3), gamma(1), delta(1), epsilon(1). CF(0) has three main subunits: a, b and c.

The protein localises to the cell inner membrane. Produces ATP from ADP in the presence of a proton gradient across the membrane. This is ATP synthase epsilon chain from Maridesulfovibrio salexigens (strain ATCC 14822 / DSM 2638 / NCIMB 8403 / VKM B-1763) (Desulfovibrio salexigens).